The chain runs to 309 residues: ATP synthase gamma chain (309 aa).

Belongs to the ATPase gamma chain family. In terms of assembly, F-type ATPases have 2 components, CF(1) - the catalytic core - and CF(0) - the membrane proton channel. CF(1) has five subunits: alpha(3), beta(3), gamma(1), delta(1), epsilon(1). CF(0) has three main subunits: a, b and c.

It is found in the cell membrane. Its function is as follows. Produces ATP from ADP in the presence of a proton gradient across the membrane. The gamma chain is believed to be important in regulating ATPase activity and the flow of protons through the CF(0) complex. The polypeptide is ATP synthase gamma chain (Salinispora arenicola (strain CNS-205)).